The sequence spans 604 residues: Serine/threonine-protein kinase A-Raf (604 aa).

Positions 19 to 91 constitute an RBD domain; it reads GTVKVYLPNK…DGEELIVEVL (73 aa). The Phorbol-ester/DAG-type zinc-finger motif lies at 98-144; the sequence is MHNFVRKTFFSLAFCDFCLKFLFHGFRCQTCGYKFHQHCSSKVPTVC. Zn(2+)-binding residues include H99, C112, C115, C125, C128, H133, C136, and C144. Phosphoserine occurs at positions 157 and 162. Disordered stretches follow at residues 177–222 and 241–288; these read NELL…HMVS and TDAA…EKKK. Phosphothreonine is present on T181. S186 is modified (phosphoserine). The span at 210–222 shows a compositional bias: polar residues; the sequence is IRSTSTPNVHMVS. The span at 252-265 shows a compositional bias: low complexity; sequence PRGSPSPASVSSGR. Phosphoserine is present on residues S255 and S267. Basic and acidic residues predominate over residues 272 to 287; that stretch reads LPSEQRERKSLADEKK. Positions 308–568 constitute a Protein kinase domain; sequence VQLLKRIGTG…PQILATIELL (261 aa). ATP-binding positions include 314–322 and K334; that span reads IGTGSFGTV. Position 316 is a phosphothreonine (T316). D427 acts as the Proton acceptor in catalysis.

It belongs to the protein kinase superfamily. TKL Ser/Thr protein kinase family. RAF subfamily. In terms of assembly, interacts with TH1L/NELFD. Zn(2+) is required as a cofactor. Dephosphorylation by the SHOC2-MRAS-PP1c (SMP) complex consisting of SHOC2, GTP-bound M-Ras/MRAS and the catalytic subunit of protein phosphatase 1 (PPP1CA, PPP1CB or PPP1CC); this relieves inactivation and stimulates kinase activity.

It carries out the reaction L-seryl-[protein] + ATP = O-phospho-L-seryl-[protein] + ADP + H(+). It catalyses the reaction L-threonyl-[protein] + ATP = O-phospho-L-threonyl-[protein] + ADP + H(+). In terms of biological role, involved in the transduction of mitogenic signals from the cell membrane to the nucleus. May also regulate the TOR signaling cascade. Phosphorylates PFKFB2. The chain is Serine/threonine-protein kinase A-Raf (Araf) from Mus musculus (Mouse).